Reading from the N-terminus, the 481-residue chain is Glutamyl-tRNA(Gln) amidotransferase subunit A (481 aa).

Catalysis depends on charge relay system residues Lys76 and Ser151. Ser175 acts as the Acyl-ester intermediate in catalysis.

The protein belongs to the amidase family. GatA subfamily. As to quaternary structure, heterotrimer of A, B and C subunits.

The catalysed reaction is L-glutamyl-tRNA(Gln) + L-glutamine + ATP + H2O = L-glutaminyl-tRNA(Gln) + L-glutamate + ADP + phosphate + H(+). Allows the formation of correctly charged Gln-tRNA(Gln) through the transamidation of misacylated Glu-tRNA(Gln) in organisms which lack glutaminyl-tRNA synthetase. The reaction takes place in the presence of glutamine and ATP through an activated gamma-phospho-Glu-tRNA(Gln). The chain is Glutamyl-tRNA(Gln) amidotransferase subunit A from Neisseria gonorrhoeae (strain NCCP11945).